Consider the following 519-residue polypeptide: Cytochrome P450 709B1 (519 aa).

The helical transmembrane segment at 1-21 threads the bilayer; it reads MGLVIFLALIVLILIIGLRIF. Position 464 (Cys464) interacts with heme.

Belongs to the cytochrome P450 family. The cofactor is heme. In terms of tissue distribution, highly expressed in siliques.

The protein localises to the membrane. In terms of biological role, involved in stress response. Does not function as cytokinin hydroxylase in yeast heterologous system. The polypeptide is Cytochrome P450 709B1 (Arabidopsis thaliana (Mouse-ear cress)).